A 64-amino-acid chain; its full sequence is Temporin-ALf (64 aa).

A signal peptide spans M1–C22. A propeptide spanning residues E23 to R46 is cleaved from the precursor. Position 62 is a leucine amide (L62).

As to expression, expressed by the skin glands.

It localises to the secreted. Its function is as follows. Antimicrobial peptide with activity against Gram-positive and Gram-negative bacteria and against fungi. Has been tested against S.aureus (MIC=2.5 ug/mL), B.pumilus (MIC=5.0 ug/mL), B.cereus (MIC=30.0 ug/mL), E.coli (MIC=2.5 ug/mL), B.dysenteriae (MIC=5.0 ug/mL), A.cacoaceticus (MIC=30.0 ug/mL), P.aeruginosa (MIC=5.0 ug/mL) and C.albicans (MIC=2.5 ug/mL). Also shows a weak hemolytic activity. This chain is Temporin-ALf, found in Amolops loloensis (Lolokou Sucker Frog).